The sequence spans 862 residues: Protein translocase subunit SecA (862 aa).

ATP is bound by residues Gln86, Gly104 to Thr108, and Asp499. Zn(2+)-binding residues include Cys848, Cys850, Cys859, and His860.

It belongs to the SecA family. In terms of assembly, monomer and homodimer. Part of the essential Sec protein translocation apparatus which comprises SecA, SecYEG and auxiliary proteins SecDF-YajC and YidC. The cofactor is Zn(2+).

The protein resides in the cell inner membrane. It is found in the cytoplasm. The catalysed reaction is ATP + H2O + cellular proteinSide 1 = ADP + phosphate + cellular proteinSide 2.. Its function is as follows. Part of the Sec protein translocase complex. Interacts with the SecYEG preprotein conducting channel. Has a central role in coupling the hydrolysis of ATP to the transfer of proteins into and across the cell membrane, serving both as a receptor for the preprotein-SecB complex and as an ATP-driven molecular motor driving the stepwise translocation of polypeptide chains across the membrane. This is Protein translocase subunit SecA from Ehrlichia chaffeensis (strain ATCC CRL-10679 / Arkansas).